The sequence spans 104 residues: Large ribosomal subunit protein uL24 (104 aa).

The protein belongs to the universal ribosomal protein uL24 family. As to quaternary structure, part of the 50S ribosomal subunit.

One of two assembly initiator proteins, it binds directly to the 5'-end of the 23S rRNA, where it nucleates assembly of the 50S subunit. Functionally, one of the proteins that surrounds the polypeptide exit tunnel on the outside of the subunit. This is Large ribosomal subunit protein uL24 from Caulobacter sp. (strain K31).